Here is a 166-residue protein sequence, read N- to C-terminus: Cyanate hydratase (166 aa).

Residues Arg-106, Glu-109, and Ser-132 contribute to the active site.

Belongs to the cyanase family.

The enzyme catalyses cyanate + hydrogencarbonate + 3 H(+) = NH4(+) + 2 CO2. Functionally, catalyzes the reaction of cyanate with bicarbonate to produce ammonia and carbon dioxide. The polypeptide is Cyanate hydratase (Verticillium alfalfae (strain VaMs.102 / ATCC MYA-4576 / FGSC 10136) (Verticillium wilt of alfalfa)).